Consider the following 163-residue polypeptide: NADH-quinone oxidoreductase subunit I (163 aa).

4Fe-4S ferredoxin-type domains are found at residues 54–84 (LRRYPNGEERCIACKLCEAVCPALAITIESD) and 94–123 (TRYDIDLTKCIFCGFCEEACPVDAVVETPI). Cys64, Cys67, Cys70, Cys74, Cys103, Cys106, Cys109, and Cys113 together coordinate [4Fe-4S] cluster.

Belongs to the complex I 23 kDa subunit family. As to quaternary structure, NDH-1 is composed of 14 different subunits. Subunits NuoA, H, J, K, L, M, N constitute the membrane sector of the complex. Requires [4Fe-4S] cluster as cofactor.

Its subcellular location is the cell inner membrane. It carries out the reaction a quinone + NADH + 5 H(+)(in) = a quinol + NAD(+) + 4 H(+)(out). In terms of biological role, NDH-1 shuttles electrons from NADH, via FMN and iron-sulfur (Fe-S) centers, to quinones in the respiratory chain. The immediate electron acceptor for the enzyme in this species is believed to be ubiquinone. Couples the redox reaction to proton translocation (for every two electrons transferred, four hydrogen ions are translocated across the cytoplasmic membrane), and thus conserves the redox energy in a proton gradient. The sequence is that of NADH-quinone oxidoreductase subunit I from Cupriavidus pinatubonensis (strain JMP 134 / LMG 1197) (Cupriavidus necator (strain JMP 134)).